The sequence spans 156 residues: FUN14 domain-containing protein 1 (156 aa).

A YXXL motif is present at residues 19 to 22; it reads YEVL. The next 3 helical transmembrane spans lie at 49–69, 76–96, and 135–155; these read YSVATQIVMGGVTGWCAGFLF, AATAVGGGFLLLQIASHSGYV, and FIKQNIVVSSGFVGGFLLGLA.

This sequence belongs to the FUN14 family.

The protein resides in the mitochondrion outer membrane. In terms of biological role, acts as an activator of hypoxia-induced mitophagy, an important mechanism for mitochondrial quality control. This Gallus gallus (Chicken) protein is FUN14 domain-containing protein 1 (FUNDC1).